The primary structure comprises 620 residues: MIQVLLVTLCLAVFPYQGSSIILESGNVNDYEVVYPRKVTVLPKGAVQPKYEDAMQYEFKVNGEPVVLHLEKNKQLFSKDYSETHYSPDGREITTYPLVEDHCYYHGRIENDADSTASISACNGLKGHFKLQGEMYLIDPLKLPDSEAHAVFKYENVEKEDEAPKMCGVTQNWESYEPIKKASQLNLTPEQQAYLDAKKYVEFVVVLDHGMYTKYKDNLDKIKTRIFEIVNTMNEMFIPLNIRVALICLEIWSDKDKFNMTSAANVTSISFRNWRATDLLKRKSHDNAQLLTVIDFDGPTIGKAYMASMCDPKRSVGIIQDHSTINLMMAVTMAHEMGHNLGMDHDEKYCTCGAKSCVMAKALSRQPSKLFSNCSQEDYRKYLIKRRPKCILNEPNGTDIVSPPVCGNELLEVGEECDCGSPTNCQNPCCDAATCKLTPGSQCADGVCCDQCRFTRAGTECRQAKDDCDMADLCTGQSAECPTDRFQRNGHPCLNDNGYCYNRTCPTLKNQCIYFFGPNAAVAKDSCFKGNQKSNNHTYCRKENGKKIPCAPQDIKCGRLYCFRNLPGKKNICSVIYTPTDEDIGMVLPGTKCEDGKVCSNGHCVDVNIAYKSTTGFSQI.

The signal sequence occupies residues Met-1 to Ser-20. The propeptide occupies Ile-21–Pro-189. One can recognise a Peptidase M12B domain in the interval Lys-199–Pro-395. Ca(2+) is bound at residue Glu-202. 2 N-linked (GlcNAc...) asparagine glycosylation sites follow: Asn-259 and Asn-265. Asp-286 is a binding site for Ca(2+). Intrachain disulfides connect Cys-310–Cys-390, Cys-350–Cys-374, and Cys-352–Cys-357. His-335 is a Zn(2+) binding site. Glu-336 is an active-site residue. Zn(2+) contacts are provided by His-339 and His-345. An N-linked (GlcNAc...) asparagine glycan is attached at Asn-373. The Ca(2+) site is built by Cys-390 and Asn-393. N-linked (GlcNAc...) asparagine glycosylation is present at Asn-396. A Disintegrin domain is found at Pro-403–Asn-489. 6 residues coordinate Ca(2+): Val-405, Asn-408, Leu-410, Glu-412, Glu-415, and Asp-418. 14 disulfide bridges follow: Cys-406-Cys-435, Cys-417-Cys-430, Cys-419-Cys-425, Cys-429-Cys-452, Cys-443-Cys-449, Cys-448-Cys-474, Cys-461-Cys-481, Cys-468-Cys-500, Cys-493-Cys-505, Cys-512-Cys-562, Cys-527-Cys-573, Cys-540-Cys-550, Cys-557-Cys-599, and Cys-593-Cys-604. The D/ECD-tripeptide motif lies at Asp-467–Asp-469. 2 N-linked (GlcNAc...) asparagine glycosylation sites follow: Asn-502 and Asn-536.

Belongs to the venom metalloproteinase (M12B) family. P-III subfamily. P-IIIa sub-subfamily. Monomer. Requires Zn(2+) as cofactor. Expressed by the venom gland.

It is found in the secreted. Inhibited by EDTA and O-phenanthroline. Not inhibited by PMSF, benzamidine, irreversible serine-proteinase inhibitors and cysteine proteinase inhibitor E-64. Functionally, is a potent activator of prothrombin (F2). Does not elicit any hemorrhagic response. Barely inhibits collagen-induced platelet aggregation. Binds neither collagen, nor the jararhagin-monoclonal antibody MAJar3. Hydrolyzes the Aalpha-chain of fibrin and fibrinogen, without affecting the Bbeta- and gamma-chains. Is capable of triggering endothelial pro-inflammatory and procoagulant cell responses, but fails to trigger apoptosis. Induces von Willebrand factor release, and the expression of both ICAM1 and E-selectin (SELE) (without increase in VCAM1) in endothelial cells (HUVEC). Is also able to up-regulate the synthesis of the coagulation factor TF (F3). Enhances nitric oxide (NO) generation, prostacyclin production and interleukin-8 release. The chain is Zinc metalloproteinase-disintegrin-like ACLD from Agkistrodon contortrix laticinctus (Broad-banded copperhead).